A 251-amino-acid polypeptide reads, in one-letter code: ATP synthase subunit a (251 aa).

Transmembrane regions (helical) follow at residues 28–48 (FTQS…IIAL), 63–80 (LVEI…EQIG), 86–106 (FFPF…LGLF), 115–135 (HVAV…AVAL), 154–176 (ALAP…SLSI), 195–215 (FMFL…LLPM), and 219–239 (VTLV…FAIL).

The protein belongs to the ATPase A chain family. F-type ATPases have 2 components, CF(1) - the catalytic core - and CF(0) - the membrane proton channel. CF(1) has five subunits: alpha(3), beta(3), gamma(1), delta(1), epsilon(1). CF(0) has three main subunits: a(1), b(2) and c(9-12). The alpha and beta chains form an alternating ring which encloses part of the gamma chain. CF(1) is attached to CF(0) by a central stalk formed by the gamma and epsilon chains, while a peripheral stalk is formed by the delta and b chains.

The protein resides in the cell inner membrane. Its function is as follows. Key component of the proton channel; it plays a direct role in the translocation of protons across the membrane. The chain is ATP synthase subunit a from Granulibacter bethesdensis (strain ATCC BAA-1260 / CGDNIH1).